The primary structure comprises 300 residues: MLDLYPVHNFTVEQLEYEKNTRVLQPVWDWIKNGNEHILSSPLFPPFYALSIDYTWVAVFTFIDLFLYDVPFFKNAKIQKDRVVTWDLMKKSLKLQGWNQLLWIYPMALVQLIWVPDTELPILAPTVFEMVSQLAIFFLAFDFTYFWFHYFNHKIKWLYRWCHSVHHMYSSPFAASAQHLHPFELFFVATFITTVPWIFPTHCLTYWLWFFVAQSVSYEVHIGYDFPFALHRIFWFYSGAPAHDMHHLRPLTCFQPWFNYLDRLMGYHITYEDLKKMTEAKFKKFGLYSVEDEKGLIKIN.

An N-linked (GlcNAc...) asparagine glycan is attached at Asn-9. Transmembrane regions (helical) follow at residues 43-63 (LFPP…FTFI), 95-115 (LQGW…LIWV), and 130-152 (MVSQ…HYFN). The Fatty acid hydroxylase domain maps to 135 to 266 (AIFFLAFDFT…WFNYLDRLMG (132 aa)). The short motif at 148–152 (FHYFN) is the Histidine box-1 element. A Histidine box-2 motif is present at residues 163-167 (HSVHH). A helical transmembrane segment spans residues 180–200 (LHPFELFFVATFITTVPWIFP). A Histidine box-3 motif is present at residues 242–248 (AHDMHHL).

It belongs to the sterol desaturase family. Requires Fe cation as cofactor.

It is found in the membrane. Functionally, probable sterol desaturase. The chain is Cholesterol 25-hydroxylase-like protein from Caenorhabditis briggsae.